Consider the following 235-residue polypeptide: Adenosine 5'-phosphosulfate reductase (235 aa).

Cysteine 121, cysteine 122, cysteine 204, and cysteine 207 together coordinate [4Fe-4S] cluster. Catalysis depends on cysteine 230, which acts as the Nucleophile; cysteine thiosulfonate intermediate.

Belongs to the PAPS reductase family. CysH subfamily. [4Fe-4S] cluster is required as a cofactor.

It localises to the cytoplasm. It catalyses the reaction [thioredoxin]-disulfide + sulfite + AMP + 2 H(+) = adenosine 5'-phosphosulfate + [thioredoxin]-dithiol. It functions in the pathway sulfur metabolism; hydrogen sulfide biosynthesis; sulfite from sulfate. Functionally, catalyzes the formation of sulfite from adenosine 5'-phosphosulfate (APS) using thioredoxin as an electron donor. The sequence is that of Adenosine 5'-phosphosulfate reductase from Geobacillus kaustophilus (strain HTA426).